We begin with the raw amino-acid sequence, 1199 residues long: DNA-directed RNA polymerase subunit beta' (1199 aa).

Cys-60, Cys-62, Cys-75, and Cys-78 together coordinate Zn(2+). 3 residues coordinate Mg(2+): Asp-449, Asp-451, and Asp-453. Zn(2+) contacts are provided by Cys-818, Cys-892, Cys-899, and Cys-902.

Belongs to the RNA polymerase beta' chain family. In terms of assembly, the RNAP catalytic core consists of 2 alpha, 1 beta, 1 beta' and 1 omega subunit. When a sigma factor is associated with the core the holoenzyme is formed, which can initiate transcription. Requires Mg(2+) as cofactor. Zn(2+) serves as cofactor.

The catalysed reaction is RNA(n) + a ribonucleoside 5'-triphosphate = RNA(n+1) + diphosphate. Its function is as follows. DNA-dependent RNA polymerase catalyzes the transcription of DNA into RNA using the four ribonucleoside triphosphates as substrates. This chain is DNA-directed RNA polymerase subunit beta', found in Bacillus pumilus (strain SAFR-032).